The primary structure comprises 215 residues: 3-demethoxyubiquinol 3-hydroxylase (215 aa).

Fe cation contacts are provided by E64, E94, H97, E146, E178, and H181.

This sequence belongs to the COQ7 family. Fe cation is required as a cofactor.

Its subcellular location is the cell membrane. The catalysed reaction is a 5-methoxy-2-methyl-3-(all-trans-polyprenyl)benzene-1,4-diol + AH2 + O2 = a 3-demethylubiquinol + A + H2O. It functions in the pathway cofactor biosynthesis; ubiquinone biosynthesis. Its function is as follows. Catalyzes the hydroxylation of 2-nonaprenyl-3-methyl-6-methoxy-1,4-benzoquinol during ubiquinone biosynthesis. This Coxiella burnetii (strain Dugway 5J108-111) protein is 3-demethoxyubiquinol 3-hydroxylase.